The primary structure comprises 203 residues: MAERFRGYLPVVVDVETGGFNSATDALLEIAAVTIGMDEKGFLFPEHTYFHRVEPFEGANIEPAALEFTGIKLDHPLRMAVSEESAMTDIFRGVRKALKANGCKRAILVGHNSSFDLGFLNAAVARNDLKRNPFHPFSSFDTATLAGLAYGQTVLARACQSADIDFDGREAHSARYDTEKTAELFCGIVNRWKEMGGWRDFND.

Residues 11–185 (VVVDVETGGF…YDTEKTAELF (175 aa)) enclose the Exonuclease domain. Residues Asp-14, Glu-16, His-172, and Asp-177 each contribute to the Mg(2+) site. His-172 acts as the Proton donor/acceptor in catalysis.

The protein belongs to the RNase T family. In terms of assembly, homodimer. The cofactor is Mg(2+).

Its function is as follows. Trims short 3' overhangs of a variety of RNA species, leaving a one or two nucleotide 3' overhang. Responsible for the end-turnover of tRNA: specifically removes the terminal AMP residue from uncharged tRNA (tRNA-C-C-A). Also appears to be involved in tRNA biosynthesis. This chain is Ribonuclease T, found in Pseudomonas putida (strain ATCC 47054 / DSM 6125 / CFBP 8728 / NCIMB 11950 / KT2440).